The chain runs to 607 residues: Synaptotagmin-like protein 3 (607 aa).

The RabBD domain maps to Glu4 to Glu123. The interval Val221–Ser279 is disordered. The span at Ser230–Ala241 shows a compositional bias: polar residues. The span at Lys248–Pro259 shows a compositional bias: basic and acidic residues. C2 domains are found at residues Val305–Tyr430 and Leu458–His590.

In terms of assembly, monomer. Binds NRXN1. Binds RAB27A that has been activated by GTP-binding via its N-terminus. As to expression, highly expressed in spleen and lung. Detected at lower levels in heart and testis.

The protein resides in the endomembrane system. May act as Rab effector protein and play a role in vesicle trafficking. Binds phospholipids in the presence of calcium ions. The sequence is that of Synaptotagmin-like protein 3 (Sytl3) from Mus musculus (Mouse).